Reading from the N-terminus, the 354-residue chain is Selenide, water dikinase (354 aa).

Residue C23 is part of the active site. ATP is bound by residues K26 and 54 to 56 (TSD). D57 contacts Mg(2+). ATP-binding positions include D74, D97, and 145 to 147 (GHS). A Mg(2+)-binding site is contributed by D97. D233 serves as a coordination point for Mg(2+).

Belongs to the selenophosphate synthase 1 family. Class I subfamily. As to quaternary structure, homodimer. Mg(2+) is required as a cofactor.

The enzyme catalyses hydrogenselenide + ATP + H2O = selenophosphate + AMP + phosphate + 2 H(+). Its function is as follows. Synthesizes selenophosphate from selenide and ATP. The chain is Selenide, water dikinase from Burkholderia pseudomallei (strain K96243).